Reading from the N-terminus, the 404-residue chain is Dihydroorotase (404 aa).

2 residues coordinate Zn(2+): His57 and His59. Residues His59–Arg61 and Asn91 contribute to the substrate site. The Zn(2+) site is built by Lys135, His164, His204, and Asp272. An N6-carboxylysine modification is found at Lys135. Residue Asp272 is part of the active site. Substrate-binding positions include His276 and Ala286–Gly287.

This sequence belongs to the metallo-dependent hydrolases superfamily. DHOase family. Class I DHOase subfamily. Requires Zn(2+) as cofactor.

It carries out the reaction (S)-dihydroorotate + H2O = N-carbamoyl-L-aspartate + H(+). It functions in the pathway pyrimidine metabolism; UMP biosynthesis via de novo pathway; (S)-dihydroorotate from bicarbonate: step 3/3. In terms of biological role, catalyzes the reversible cyclization of carbamoyl aspartate to dihydroorotate. This chain is Dihydroorotase, found in Pyrococcus abyssi (strain GE5 / Orsay).